The sequence spans 399 residues: Chalcone synthase 2 (399 aa).

The active site involves cysteine 166.

It belongs to the thiolase-like superfamily. Chalcone/stilbene synthases family.

The catalysed reaction is (E)-4-coumaroyl-CoA + 3 malonyl-CoA + 3 H(+) = 2',4,4',6'-tetrahydroxychalcone + 3 CO2 + 4 CoA. The protein operates within secondary metabolite biosynthesis; flavonoid biosynthesis. Functionally, the primary product of this enzyme is 4,2',4',6'-tetrahydroxychalcone (also termed naringenin-chalcone or chalcone) which can under specific conditions spontaneously isomerize into naringenin. Substrate preference is feruloyl-CoA = caffeoyl-CoA &gt;&gt; cinnamoyl-CoA. The polypeptide is Chalcone synthase 2 (CHS2) (Hordeum vulgare (Barley)).